We begin with the raw amino-acid sequence, 240 residues long: Ribonuclease PH (240 aa).

Phosphate-binding positions include Arg-87 and 125-127 (GTR).

Belongs to the RNase PH family. As to quaternary structure, homohexameric ring arranged as a trimer of dimers.

It catalyses the reaction tRNA(n+1) + phosphate = tRNA(n) + a ribonucleoside 5'-diphosphate. Its function is as follows. Phosphorolytic 3'-5' exoribonuclease that plays an important role in tRNA 3'-end maturation. Removes nucleotide residues following the 3'-CCA terminus of tRNAs; can also add nucleotides to the ends of RNA molecules by using nucleoside diphosphates as substrates, but this may not be physiologically important. Probably plays a role in initiation of 16S rRNA degradation (leading to ribosome degradation) during starvation. The protein is Ribonuclease PH of Pseudomonas fluorescens (strain ATCC BAA-477 / NRRL B-23932 / Pf-5).